A 315-amino-acid chain; its full sequence is MQKPWVEKYRPETLPEVVGHHEIIKRLTNYVEKKSMPHLLFSGSPGVGKTTAALALAKDLYGDTWRENFLELNSSDERGIDVIRTKVKDFARTKPIGDAPFKVIFLDESDALTSDAQNALRRTMEKYSDICRFILSCNYPSKIIPPIQSRCAIFRFSPLKTEDLVENLKDISEKETLTLEKGGIDAIIYVSEGDMRKAINVLQTAAAVSDTVTEEIVYKVASKARPDEIKKMTQLALNGKFVEAREQLYNLMIDWGMSGEDILIQVFREVPNLDISEKEKVHLVEAIGECDFRIVEGSNERIQLSALLAKMGILE.

An ATP-binding site is contributed by 43–50 (GSPGVGKT).

It belongs to the activator 1 small subunits family. RfcS subfamily. Heteromultimer composed of small subunits (RfcS) and large subunits (RfcL).

In terms of biological role, part of the RFC clamp loader complex which loads the PCNA sliding clamp onto DNA. The sequence is that of Replication factor C small subunit from Methanococcus maripaludis (strain C6 / ATCC BAA-1332).